A 229-amino-acid polypeptide reads, in one-letter code: Potassium/proton antiporter CemA (229 aa).

3 helical membrane passes run leucine 7–phenylalanine 27, leucine 106–leucine 126, and leucine 193–leucine 213.

This sequence belongs to the CemA family.

The protein localises to the plastid. It is found in the chloroplast inner membrane. The catalysed reaction is K(+)(in) + H(+)(out) = K(+)(out) + H(+)(in). Contributes to K(+)/H(+) antiport activity by supporting proton efflux to control proton extrusion and homeostasis in chloroplasts in a light-dependent manner to modulate photosynthesis. Prevents excessive induction of non-photochemical quenching (NPQ) under continuous-light conditions. Indirectly promotes efficient inorganic carbon uptake into chloroplasts. In Illicium oligandrum (Star anise), this protein is Potassium/proton antiporter CemA.